Reading from the N-terminus, the 355-residue chain is Uroporphyrinogen decarboxylase (355 aa).

Substrate is bound by residues Arg-27 to Arg-31, Asp-78, Tyr-155, Thr-210, and His-328.

Belongs to the uroporphyrinogen decarboxylase family. Homodimer.

The protein resides in the cytoplasm. The enzyme catalyses uroporphyrinogen III + 4 H(+) = coproporphyrinogen III + 4 CO2. It participates in porphyrin-containing compound metabolism; protoporphyrin-IX biosynthesis; coproporphyrinogen-III from 5-aminolevulinate: step 4/4. Catalyzes the decarboxylation of four acetate groups of uroporphyrinogen-III to yield coproporphyrinogen-III. This chain is Uroporphyrinogen decarboxylase, found in Pseudomonas fluorescens (strain Pf0-1).